A 238-amino-acid chain; its full sequence is MKVHLFVTCLIDTMQPNVGKATVEVLERLGVEVEFPESQVCCGQPAFNSGYTKETIKAAKNMIKAFETAEYVVTPSGSCKAMFLEYPQLLKEDPVWSTQAEALAEKTYELTEFIVDILHVTDVGASLKGNATYHTSCHMTRLLRIKEAPFTLLSNVKDLSMTPLPRAENCCGFGGTFSVKMTPISEQMVDEKVQSIEETGAQYIIGADCGCLLNIGGRLNRLDKPIQVMHIAEVLNSR.

Belongs to the LutA/YkgE family.

Its function is as follows. Is involved in L-lactate degradation and allows cells to grow with lactate as the sole carbon source. The chain is Lactate utilization protein A from Bacillus pumilus (strain SAFR-032).